The chain runs to 386 residues: MNIHEYQAKEILRKYGVPTSTGLVVTKTEKINEAIDKLNTKVYVVKAQIHAGGRGKAGGVKVVKSKEEAKKVAHDMFGINLVTHQTGPQGQKVNHLYIESGCDILKEYYFSIVFDRSASCITFIASTEGGVDIEAVAEKMPEKIIKFAVDPATGLQDFHMRGIAYGLGFKDSQAKQMKEIVKSVYNAFIETDATQIEINPLIINSYKNLLALDAKITFDDNGLFKHPNITAMRDHDEEDPLETRAANAGLSYVKMDGNIGCMVNGAGLAMATMDIIKLYGASPANFLDVGGGADRERVKEALKIILSDKEVKGILVNIFGGIMRCDIIAEGIIAAARDIGITVPLVVRLAGTNVEKGKEILSNSNLKIIPAHDLADAANKIVEAIR.

Residues 9–244 (KEILRKYGVP…HDEEDPLETR (236 aa)) enclose the ATP-grasp domain. ATP is bound by residues lysine 46, 53-55 (GRG), glutamate 99, cysteine 102, and glutamate 107. Mg(2+) contacts are provided by asparagine 199 and aspartate 213. Substrate contacts are provided by residues asparagine 264 and 321–323 (GIM).

This sequence belongs to the succinate/malate CoA ligase beta subunit family. Heterotetramer of two alpha and two beta subunits. Requires Mg(2+) as cofactor.

It catalyses the reaction succinate + ATP + CoA = succinyl-CoA + ADP + phosphate. The catalysed reaction is GTP + succinate + CoA = succinyl-CoA + GDP + phosphate. The protein operates within carbohydrate metabolism; tricarboxylic acid cycle; succinate from succinyl-CoA (ligase route): step 1/1. Its function is as follows. Succinyl-CoA synthetase functions in the citric acid cycle (TCA), coupling the hydrolysis of succinyl-CoA to the synthesis of either ATP or GTP and thus represents the only step of substrate-level phosphorylation in the TCA. The beta subunit provides nucleotide specificity of the enzyme and binds the substrate succinate, while the binding sites for coenzyme A and phosphate are found in the alpha subunit. In Rickettsia typhi (strain ATCC VR-144 / Wilmington), this protein is Succinate--CoA ligase [ADP-forming] subunit beta.